The following is a 500-amino-acid chain: Histidinol dehydrogenase homolog 1 (500 aa).

The tract at residues 1-25 (MPPAGGIFHRPPTTRKSRRLTPRSA) is disordered. A compositionally biased stretch (basic residues) spans 12–21 (PTTRKSRRLT). Positions 313 and 316 each coordinate Zn(2+). Active-site proton acceptor residues include E381 and H382. Zn(2+) contacts are provided by D415 and H475.

Belongs to the histidinol dehydrogenase family. It depends on Zn(2+) as a cofactor.

This is Histidinol dehydrogenase homolog 1 from Mesorhizobium japonicum (strain LMG 29417 / CECT 9101 / MAFF 303099) (Mesorhizobium loti (strain MAFF 303099)).